Here is a 432-residue protein sequence, read N- to C-terminus: MTQLEYALSGIITKEMKIVADYEGVSEEFILEEVKKGEIVIPANVNHINLVPKGIGKGLSTKVNANIGTSDAFPEIGKEIEKLKVAIDAGADAVMDLSTGGDVNKSRREIIKNSSVPVGTVPMYQAAVESISRYGSIVAMPEEFIFKVIEEQAKDGVDFITVHCGLTLESLKRLKDNKRIMNVVSRGGAFTIAWMIHNEKENPLYQYFDRLLDIAKKYDVTLSLGDGLRPGCLEDATDAAQIQELIILGELVKKAREAGVQVMVEGPGHVPIDQIEANVKLQKSLCHNAPFYVLGPVVTDIAPGYDHITAAIGGAIAAFAGADFLCYVTPAEHLGLPDIQDVKEGVIAAKIAAHAADIAKGIKKAREKDLAMAKARANLDWNEQIQLSIDPEKAEKYRVTKNKPNVETCSMCGKFCAMQIVSEYLGTPTTSC.

Residues Asn66, Met95, Tyr124, His163, 185 to 187 (SRG), 226 to 229 (DGLR), and Glu265 contribute to the substrate site. His269 is a Zn(2+) binding site. Position 292 (Tyr292) interacts with substrate. His333 provides a ligand contact to Zn(2+). [4Fe-4S] cluster is bound by residues Cys409, Cys412, and Cys416.

The protein belongs to the ThiC family. [4Fe-4S] cluster serves as cofactor.

It carries out the reaction 5-amino-1-(5-phospho-beta-D-ribosyl)imidazole + S-adenosyl-L-methionine = 4-amino-2-methyl-5-(phosphooxymethyl)pyrimidine + CO + 5'-deoxyadenosine + formate + L-methionine + 3 H(+). It functions in the pathway cofactor biosynthesis; thiamine diphosphate biosynthesis. In terms of biological role, catalyzes the synthesis of the hydroxymethylpyrimidine phosphate (HMP-P) moiety of thiamine from aminoimidazole ribotide (AIR) in a radical S-adenosyl-L-methionine (SAM)-dependent reaction. The chain is Phosphomethylpyrimidine synthase from Caldanaerobacter subterraneus subsp. tengcongensis (strain DSM 15242 / JCM 11007 / NBRC 100824 / MB4) (Thermoanaerobacter tengcongensis).